A 95-amino-acid polypeptide reads, in one-letter code: UPF0358 protein BA_4159/GBAA_4159/BAS3861 (95 aa).

The protein belongs to the UPF0358 family.

This is UPF0358 protein BA_4159/GBAA_4159/BAS3861 from Bacillus anthracis.